The primary structure comprises 542 residues: Chitinase 1 (542 aa).

Residues 68–506 (FNVLCYFTDW…NAAHEGLKRR (439 aa)) enclose the GH18 domain. Chitin is bound by residues 186–187 (QE) and 213–216 (GGWS). Residue E256 is the Proton donor of the active site. Residues Y257, 323–326 (MTYD), and W486 contribute to the chitin site.

It belongs to the glycosyl hydrolase 18 family. As to quaternary structure, semipurified toxin complex consists of at least YenA1-YenA2-YenB-YenC1-YenC2-Chi1-Chi2. The Yen-TC:K9 subcomplex is about 26 nm tall and 22 nm in diameter with 5-fold symmetry and 5 copies of YenA1, YenA2, Chi1 and Chi2; the chitinase subunits may be solvent accessible on the exterior the complex. The Yen-TC:K9 subcomplex has no insecticidal activity. The native complex with additional YenB, YenC1 and YenC2 subunits is 16 nm taller and is insecticidal; the toxicity-conferring subunits are present at about 1 copy each.

It is found in the secreted. The catalysed reaction is Random endo-hydrolysis of N-acetyl-beta-D-glucosaminide (1-&gt;4)-beta-linkages in chitin and chitodextrins.. Its activity is regulated as follows. Toxin complex is secreted when grown at 25 degrees Celsius or less; at higher temperatures the proteins are present intracellularly but not secreted. Its function is as follows. Part of an orally active toxin complex (TC) with strong insecticidal effects on larvae of the Coleoptera Costelytra zealandica, Acrossidius tasmania and Adoryphorus couloni and some Lepidoptera larvae. The TC has an endochitinase activity. This subunit might aid infection by degradation of the larval peritrophic membrane. The chain is Chitinase 1 from Yersinia entomophaga.